Consider the following 515-residue polypeptide: Maturase K (515 aa).

This sequence belongs to the intron maturase 2 family. MatK subfamily.

The protein resides in the plastid. The protein localises to the chloroplast. Functionally, usually encoded in the trnK tRNA gene intron. Probably assists in splicing its own and other chloroplast group II introns. This chain is Maturase K, found in Pinus luchuensis (Ryukyu island pine).